Reading from the N-terminus, the 451-residue chain is Probable plasmid replicative DNA helicase (451 aa).

In terms of domain architecture, SF4 helicase spans 194–451 (NDSFYDGLPT…SKFSAIKKVW (258 aa)). 225-232 (ARPSIGKT) serves as a coordination point for ATP.

Belongs to the helicase family. DnaB subfamily. Homohexamer.

The enzyme catalyses Couples ATP hydrolysis with the unwinding of duplex DNA at the replication fork by translocating in the 5'-3' direction. This creates two antiparallel DNA single strands (ssDNA). The leading ssDNA polymer is the template for DNA polymerase III holoenzyme which synthesizes a continuous strand.. It catalyses the reaction ATP + H2O = ADP + phosphate + H(+). Its function is as follows. A replicative DNA helicase, it participates in initiation and elongation during DNA replication. Travels ahead of the DNA replisome, separating dsDNA into templates for DNA synthesis. A processive ATP-dependent 5'-3' DNA helicase it has DNA-dependent ATPase activity. The protein is Probable plasmid replicative DNA helicase of Chlamydia muridarum (strain MoPn / Nigg).